A 213-amino-acid chain; its full sequence is tRNA (guanine-N(7)-)-methyltransferase (213 aa).

The S-adenosyl-L-methionine site is built by Glu-44, Glu-69, Asp-96, and Asp-118. The active site involves Asp-118. Substrate contacts are provided by residues Lys-122, Asp-154, and 192–195 (TEYE).

The protein belongs to the class I-like SAM-binding methyltransferase superfamily. TrmB family.

It carries out the reaction guanosine(46) in tRNA + S-adenosyl-L-methionine = N(7)-methylguanosine(46) in tRNA + S-adenosyl-L-homocysteine. It functions in the pathway tRNA modification; N(7)-methylguanine-tRNA biosynthesis. In terms of biological role, catalyzes the formation of N(7)-methylguanine at position 46 (m7G46) in tRNA. The protein is tRNA (guanine-N(7)-)-methyltransferase of Limosilactobacillus reuteri (strain DSM 20016) (Lactobacillus reuteri).